The sequence spans 470 residues: Cysteine--tRNA ligase (470 aa).

Cys27 provides a ligand contact to Zn(2+). The 'HIGH' region motif lies at 29–39 (PTVYNFFHIGN). Zn(2+) contacts are provided by Cys211, His236, and Glu240. The short motif at 268–272 (KMSKS) is the 'KMSKS' region element. Lys271 is a binding site for ATP.

This sequence belongs to the class-I aminoacyl-tRNA synthetase family. Monomer. Requires Zn(2+) as cofactor.

Its subcellular location is the cytoplasm. The enzyme catalyses tRNA(Cys) + L-cysteine + ATP = L-cysteinyl-tRNA(Cys) + AMP + diphosphate. The protein is Cysteine--tRNA ligase of Clostridium botulinum (strain Alaska E43 / Type E3).